The sequence spans 493 residues: Glutamate--tRNA ligase (493 aa).

Residues 10 to 20 (PSPTGDPHVGT) carry the 'HIGH' region motif. The 'KMSKS' region signature appears at 251 to 255 (KLSKR). K254 contacts ATP.

It belongs to the class-I aminoacyl-tRNA synthetase family. Glutamate--tRNA ligase type 1 subfamily. In terms of assembly, monomer.

The protein localises to the cytoplasm. It carries out the reaction tRNA(Glu) + L-glutamate + ATP = L-glutamyl-tRNA(Glu) + AMP + diphosphate. Catalyzes the attachment of glutamate to tRNA(Glu) in a two-step reaction: glutamate is first activated by ATP to form Glu-AMP and then transferred to the acceptor end of tRNA(Glu). The sequence is that of Glutamate--tRNA ligase from Pseudomonas putida (strain GB-1).